Reading from the N-terminus, the 471-residue chain is Dynein regulatory complex subunit 4 (471 aa).

The segment at 1–24 (MAPKKKGTKKESKKDAVATGDIEG) is disordered. 2 coiled-coil regions span residues 23 to 239 (EGAS…YNDI) and 282 to 425 (LSRA…DVAK).

Belongs to the DRC4 family. As to quaternary structure, component of the nexin-dynein regulatory complex (N-DRC). Interacts with DRC1, DRC2 and DRC5.

Its subcellular location is the cytoplasm. The protein resides in the cytoskeleton. The protein localises to the flagellum axoneme. It localises to the flagellum basal body. In terms of biological role, component of the nexin-dynein regulatory complex (N-DRC), a key regulator of ciliary/flagellar motility which maintains the alignment and integrity of the distal axoneme and regulates microtubule sliding in motile axonemes. Plays an important role in the assembly of the N-DRC linker. The polypeptide is Dynein regulatory complex subunit 4 (Chlamydomonas reinhardtii (Chlamydomonas smithii)).